A 72-amino-acid polypeptide reads, in one-letter code: Translation initiation factor IF-1 (72 aa).

The S1-like domain occupies 1–72; the sequence is MAKEKDTIRT…PTRGRIVYRK (72 aa).

The protein belongs to the IF-1 family. Component of the 30S ribosomal translation pre-initiation complex which assembles on the 30S ribosome in the order IF-2 and IF-3, IF-1 and N-formylmethionyl-tRNA(fMet); mRNA recruitment can occur at any time during PIC assembly.

The protein resides in the cytoplasm. Functionally, one of the essential components for the initiation of protein synthesis. Stabilizes the binding of IF-2 and IF-3 on the 30S subunit to which N-formylmethionyl-tRNA(fMet) subsequently binds. Helps modulate mRNA selection, yielding the 30S pre-initiation complex (PIC). Upon addition of the 50S ribosomal subunit IF-1, IF-2 and IF-3 are released leaving the mature 70S translation initiation complex. The protein is Translation initiation factor IF-1 of Thermus thermophilus (strain ATCC BAA-163 / DSM 7039 / HB27).